The sequence spans 485 residues: Glutamate--tRNA ligase (485 aa).

The 'HIGH' region signature appears at P11 to N21. Zn(2+) is bound by residues C108, C110, C135, and D137. Residues K252–R256 carry the 'KMSKS' region motif. ATP is bound at residue K255.

The protein belongs to the class-I aminoacyl-tRNA synthetase family. Glutamate--tRNA ligase type 1 subfamily. Monomer. The cofactor is Zn(2+).

The protein resides in the cytoplasm. It catalyses the reaction tRNA(Glu) + L-glutamate + ATP = L-glutamyl-tRNA(Glu) + AMP + diphosphate. Functionally, catalyzes the attachment of glutamate to tRNA(Glu) in a two-step reaction: glutamate is first activated by ATP to form Glu-AMP and then transferred to the acceptor end of tRNA(Glu). The sequence is that of Glutamate--tRNA ligase from Clostridium botulinum (strain Okra / Type B1).